The primary structure comprises 468 residues: Trehalose-binding lipoprotein LpqY (468 aa).

The signal sequence occupies residues 1–25; that stretch reads MVMSRGRIPRLGAAVLVALTTAAAA. The N-palmitoyl cysteine moiety is linked to residue cysteine 26. A lipid anchor (S-diacylglycerol cysteine) is attached at cysteine 26. Cysteine 54 and cysteine 372 are disulfide-bonded. Alpha,alpha-trehalose is bound by residues aspartate 97, asparagine 151, tryptophan 276, phenylalanine 278, glycine 351, and arginine 421.

It belongs to the bacterial solute-binding protein 1 family. As to quaternary structure, monomer. The complex is composed of two ATP-binding proteins (SugC), two transmembrane proteins (SugA and SugB) and a solute-binding protein (LpqY).

The protein resides in the cell inner membrane. Functionally, part of the ABC transporter complex LpqY-SugA-SugB-SugC, which is highly specific for uptake of trehalose. Involved in the recycling of extracellular trehalose released from trehalose-containing molecules synthesized by M.tuberculosis. Trehalose uptake is essential for virulence. In Mycobacterium tuberculosis (strain CDC 1551 / Oshkosh), this protein is Trehalose-binding lipoprotein LpqY (lpqY).